We begin with the raw amino-acid sequence, 393 residues long: Isocitrate dehydrogenase [NAD] subunit gamma 1, mitochondrial (393 aa).

The transit peptide at 1–39 (MALKVAIAAGSAAKAIFKPALLCRPWEVLAAHEAPRRSI) directs the protein to the mitochondrion. Residue threonine 120 coordinates citrate. Residue serine 130 is modified to Phosphoserine. Citrate is bound at residue asparagine 133. Arginine 136 and arginine 167 together coordinate substrate. Lysine 206 carries the post-translational modification N6-acetyllysine. The residue at position 226 (lysine 226) is an N6-succinyllysine. Position 254 (aspartate 254) interacts with substrate. Aspartate 254 serves as a coordination point for Mn(2+). Positions 312, 313, and 324 each coordinate ADP.

This sequence belongs to the isocitrate and isopropylmalate dehydrogenases family. In terms of assembly, heterooligomer of subunits alpha (IDH3A), beta (IDH3B), and gamma (IDH3G) in the apparent ratio of 2:1:1. The heterodimer containing one IDH3A and one IDH3B subunit and the heterodimer containing one IDH3A and one IDH3G subunit assemble into a heterotetramer (which contains two subunits of IDH3A, one of IDH3B and one of IDH3G) and further into the heterooctamer. The cofactor is Mg(2+). Mn(2+) serves as cofactor.

Its subcellular location is the mitochondrion. The heterotetramer and the heterodimer composed of IDH3A and IDH3G subunits can be allosterically activated by citrate (CIT) or/and ADP, and the two activators can act independently or synergistically. The heterodimer composed of IDH3A and IDH3B subunits cannot be allosterically regulated and the allosteric regulation of the heterotetramer is through the IDH3G subunit and not the IDH3B subunit. The IDH3G subunit contains the allosteric site which consists of a CIT-binding site and an ADP-binding site, and the binding of CIT and ADP causes conformational changes at the allosteric site which are transmitted to the active site in the catalytic subunit (IDH3A) through a cascade of conformational changes at the heterodimer interface, leading to stabilization of the isocitrate-binding at the active site and thus activation of the enzyme. ATP can activate the heterotetramer and the heterodimer composed of IDH3A and IDH3G subunits at low concentrations but inhibits their activities at high concentrations, whereas ATP exhibits only inhibitory effect on the heterodimer composed of IDH3A and IDH3B subunits. Its function is as follows. Regulatory subunit which plays a role in the allosteric regulation of the enzyme catalyzing the decarboxylation of isocitrate (ICT) into alpha-ketoglutarate. The heterodimer composed of the alpha (IDH3A) and beta (IDH3B) subunits and the heterodimer composed of the alpha (IDH3A) and gamma (IDH3G) subunits, have considerable basal activity but the full activity of the heterotetramer (containing two subunits of IDH3A, one of IDH3B and one of IDH3G) requires the assembly and cooperative function of both heterodimers. This chain is Isocitrate dehydrogenase [NAD] subunit gamma 1, mitochondrial (Idh3g), found in Rattus norvegicus (Rat).